The sequence spans 433 residues: Protein FAM98B (433 aa).

The interval 303–433 is disordered; it reads GRVPDRGGRP…GGGGGGYRRY (131 aa). Residues 305 to 314 are compositionally biased toward basic and acidic residues; the sequence is VPDRGGRPNE. Positions 331–433 are enriched in gly residues; sequence GGGGRGGWGG…GGGGGGYRRY (103 aa).

This sequence belongs to the FAM98 family. As to quaternary structure, homodimer. Component of the tRNA-splicing ligase complex. Interacts with FAM98A. Expressed strongly in colorectal cancer tissues compared to wild-type colon samples (at protein level). Expressed strongly in colorectal cancer tissues compared to wild-type colon samples.

The protein localises to the nucleus. It localises to the cytoplasm. Its function is as follows. Positively stimulates PRMT1-induced protein arginine dimethylated arginine methylation. This is Protein FAM98B (FAM98B) from Homo sapiens (Human).